Consider the following 328-residue polypeptide: MIEKIWSGESPLWRLLLPLSWLYGLVSGAIRLCYKLKLKRAWRAPVPVVVVGNLTAGGNGKTPVVVWLVEQLQQRGIRVGVVSRGYGGKAESYPLLLSADTTTAQAGDEPVLIYQRTDAPVAVSPVRSDAVKAILAQHPDVQIIVTDDGLQHYRLARDVEIVVIDGVRRFGNGWWLPAGPMRERAGRLKSVDAVIVNGGVPRSGEIPMHLLPGQAVNLRTGTRCDVAQLEHVVAMAGIGHPPRFFATLKMCGVQPEKCVPLADHQSLNHADVSALVSAGQTLVMTEKDAVKCRAFAEENWWYLPVDAQLSGDEPAKLLTQLTLLASGN.

Residue 55-62 participates in ATP binding; sequence TAGGNGKT.

It belongs to the LpxK family.

The catalysed reaction is lipid A disaccharide (E. coli) + ATP = lipid IVA (E. coli) + ADP + H(+). Its pathway is glycolipid biosynthesis; lipid IV(A) biosynthesis; lipid IV(A) from (3R)-3-hydroxytetradecanoyl-[acyl-carrier-protein] and UDP-N-acetyl-alpha-D-glucosamine: step 6/6. Its function is as follows. Transfers the gamma-phosphate of ATP to the 4'-position of a tetraacyldisaccharide 1-phosphate intermediate (termed DS-1-P) to form tetraacyldisaccharide 1,4'-bis-phosphate (lipid IVA). This Escherichia coli (strain K12) protein is Tetraacyldisaccharide 4'-kinase (lpxK).